Here is a 319-residue protein sequence, read N- to C-terminus: Aminoimidazole riboside kinase (319 aa).

Residues aspartate 16, glycine 31, and tyrosine 101 each coordinate 5-amino-1-(beta-D-ribosyl)imidazole. An ATP-binding site is contributed by 158-160 (DVN). Arginine 162 is a 5-amino-1-(beta-D-ribosyl)imidazole binding site. K(+)-binding residues include alanine 180, alanine 181, and alanine 183. ATP-binding residues include lysine 187 and glutamate 192. Glycine 213 is a binding site for K(+). 220 to 225 (SLGADG) lines the ATP pocket. Positions 246 and 248 each coordinate K(+). A 5-amino-1-(beta-D-ribosyl)imidazole-binding site is contributed by aspartate 252. Residue aspartate 252 is the Proton acceptor of the active site. Asparagine 281 serves as a coordination point for ATP. Alanine 287, alanine 290, and glycine 292 together coordinate K(+).

This sequence belongs to the carbohydrate kinase PfkB family. As to quaternary structure, homodimer.

The enzyme catalyses 5-amino-1-(beta-D-ribosyl)imidazole + ATP = 5-amino-1-(5-phospho-beta-D-ribosyl)imidazole + ADP + H(+). Potassium may regulate kinase activity. Its function is as follows. Phosphorylates 5-amino-1-(beta-D-ribosyl)imidazole (AIRs) to form 5-amino-1-(5-phospho-beta-D-ribosyl)imidazole (AIR), an important intermediate in the purine and thiamine biosynthetic pathways. It allows the use of exogenous aminoimidazole riboside (AIRs) to satisfy the cellular requirement for purines and thiamine. This is Aminoimidazole riboside kinase from Salmonella typhimurium (strain LT2 / SGSC1412 / ATCC 700720).